Here is a 364-residue protein sequence, read N- to C-terminus: Chorismate synthase (364 aa).

2 residues coordinate NADP(+): R48 and R54. FMN contacts are provided by residues 125–127, 238–239, G278, 293–297, and R319; these read RSS, NA, and KPTSS.

The protein belongs to the chorismate synthase family. As to quaternary structure, homotetramer. FMNH2 is required as a cofactor.

The catalysed reaction is 5-O-(1-carboxyvinyl)-3-phosphoshikimate = chorismate + phosphate. It participates in metabolic intermediate biosynthesis; chorismate biosynthesis; chorismate from D-erythrose 4-phosphate and phosphoenolpyruvate: step 7/7. Its function is as follows. Catalyzes the anti-1,4-elimination of the C-3 phosphate and the C-6 proR hydrogen from 5-enolpyruvylshikimate-3-phosphate (EPSP) to yield chorismate, which is the branch point compound that serves as the starting substrate for the three terminal pathways of aromatic amino acid biosynthesis. This reaction introduces a second double bond into the aromatic ring system. The protein is Chorismate synthase of Shewanella woodyi (strain ATCC 51908 / MS32).